Reading from the N-terminus, the 548-residue chain is Glucose-6-phosphate isomerase 1 (548 aa).

Residue E353 is the Proton donor of the active site. Catalysis depends on residues H384 and K495.

The protein belongs to the GPI family.

The protein resides in the cytoplasm. The enzyme catalyses alpha-D-glucose 6-phosphate = beta-D-fructose 6-phosphate. Its pathway is carbohydrate biosynthesis; gluconeogenesis. The protein operates within carbohydrate degradation; glycolysis; D-glyceraldehyde 3-phosphate and glycerone phosphate from D-glucose: step 2/4. Its function is as follows. Catalyzes the reversible isomerization of glucose-6-phosphate to fructose-6-phosphate. The protein is Glucose-6-phosphate isomerase 1 of Chromohalobacter salexigens (strain ATCC BAA-138 / DSM 3043 / CIP 106854 / NCIMB 13768 / 1H11).